We begin with the raw amino-acid sequence, 86 residues long: Small ribosomal subunit protein bS20 (86 aa).

The protein belongs to the bacterial ribosomal protein bS20 family.

In terms of biological role, binds directly to 16S ribosomal RNA. This Bifidobacterium longum (strain DJO10A) protein is Small ribosomal subunit protein bS20.